We begin with the raw amino-acid sequence, 390 residues long: Galactokinase (390 aa).

33-36 (EHTD) lines the substrate pocket. Residues Ser-67 and 124-130 (GAGLSSS) contribute to the ATP site. Mg(2+) contacts are provided by Ser-130 and Glu-162. Catalysis depends on Asp-174, which acts as the Proton acceptor. Substrate is bound at residue Tyr-224.

The protein belongs to the GHMP kinase family. GalK subfamily.

The protein resides in the cytoplasm. It carries out the reaction alpha-D-galactose + ATP = alpha-D-galactose 1-phosphate + ADP + H(+). It participates in carbohydrate metabolism; galactose metabolism. Functionally, catalyzes the transfer of the gamma-phosphate of ATP to D-galactose to form alpha-D-galactose-1-phosphate (Gal-1-P). In Exiguobacterium sibiricum (strain DSM 17290 / CCUG 55495 / CIP 109462 / JCM 13490 / 255-15), this protein is Galactokinase.